We begin with the raw amino-acid sequence, 468 residues long: Ubiquitin carboxyl-terminal hydrolase 17-like protein B (468 aa).

Positions 1–20 are disordered; that stretch reads MVVALSFPEADPAMSPPSAP. One can recognise a USP domain in the interval 51–348; the sequence is CGLQNTGNSC…NAYVLFYVQQ (298 aa). Cys60 (nucleophile) is an active-site residue. His307 (proton acceptor) is an active-site residue. Residues 374-449 are disordered; that stretch reads KKSGEKKHNK…GGQNLRNTEG (76 aa). Basic and acidic residues predominate over residues 394–403; sequence CENREKRSSK. Positions 422–434 are enriched in polar residues; it reads GQKQENTKLTPQE.

It belongs to the peptidase C19 family. USP17 subfamily. Ubiquitinated. As to expression, detected in brain, heart, liver, lung, kidney, ovary and spleen.

It catalyses the reaction Thiol-dependent hydrolysis of ester, thioester, amide, peptide and isopeptide bonds formed by the C-terminal Gly of ubiquitin (a 76-residue protein attached to proteins as an intracellular targeting signal).. With respect to regulation, inhibited by ubiquitin aldehyde. In terms of biological role, deubiquitinating enzyme that removes conjugated ubiquitin from specific proteins to regulate different cellular processes. This is Ubiquitin carboxyl-terminal hydrolase 17-like protein B from Mus musculus (Mouse).